The sequence spans 134 residues: Large ribosomal subunit protein bL19 (134 aa).

Residues 110–134 (ARLHQEEGPSSAAPASTPPAAAPQA) form a disordered region. The span at 125–134 (STPPAAAPQA) shows a compositional bias: pro residues.

This sequence belongs to the bacterial ribosomal protein bL19 family.

This protein is located at the 30S-50S ribosomal subunit interface and may play a role in the structure and function of the aminoacyl-tRNA binding site. The polypeptide is Large ribosomal subunit protein bL19 (Anaeromyxobacter sp. (strain Fw109-5)).